Reading from the N-terminus, the 438-residue chain is Ribosomal protein uS12 methylthiotransferase RimO (438 aa).

Residues 4–120 (HSLFLLSLGC…ILASLGARYR (117 aa)) form the MTTase N-terminal domain. [4Fe-4S] cluster is bound by residues Cys13, Cys49, Cys83, Cys144, Cys148, and Cys151. Residues 130-359 (LTPSHYAYLK…MELQEAVAES (230 aa)) form the Radical SAM core domain. Residues 362–429 (REFEGKEIEV…AHELYGEIVQ (68 aa)) form the TRAM domain.

Belongs to the methylthiotransferase family. RimO subfamily. It depends on [4Fe-4S] cluster as a cofactor.

Its subcellular location is the cytoplasm. It catalyses the reaction L-aspartate(89)-[ribosomal protein uS12]-hydrogen + (sulfur carrier)-SH + AH2 + 2 S-adenosyl-L-methionine = 3-methylsulfanyl-L-aspartate(89)-[ribosomal protein uS12]-hydrogen + (sulfur carrier)-H + 5'-deoxyadenosine + L-methionine + A + S-adenosyl-L-homocysteine + 2 H(+). Functionally, catalyzes the methylthiolation of an aspartic acid residue of ribosomal protein uS12. The polypeptide is Ribosomal protein uS12 methylthiotransferase RimO (Chlorobium chlorochromatii (strain CaD3)).